Consider the following 79-residue polypeptide: MAKAEIRKPKPKSNPLKAADITVIDYKDVALLRKFISDRGKIRARRVTGVTVQEQRKIAQAIKNAREVALLPYSGAGRG.

This sequence belongs to the bacterial ribosomal protein bS18 family. As to quaternary structure, part of the 30S ribosomal subunit. Forms a tight heterodimer with protein bS6.

Its function is as follows. Binds as a heterodimer with protein bS6 to the central domain of the 16S rRNA, where it helps stabilize the platform of the 30S subunit. In Renibacterium salmoninarum (strain ATCC 33209 / DSM 20767 / JCM 11484 / NBRC 15589 / NCIMB 2235), this protein is Small ribosomal subunit protein bS18.